A 143-amino-acid chain; its full sequence is Large ribosomal subunit protein uL13 (143 aa).

Belongs to the universal ribosomal protein uL13 family. In terms of assembly, part of the 50S ribosomal subunit.

Functionally, this protein is one of the early assembly proteins of the 50S ribosomal subunit, although it is not seen to bind rRNA by itself. It is important during the early stages of 50S assembly. The polypeptide is Large ribosomal subunit protein uL13 (Prochlorococcus marinus subsp. pastoris (strain CCMP1986 / NIES-2087 / MED4)).